Consider the following 247-residue polypeptide: LHFPL tetraspan subfamily member 4 protein (247 aa).

A run of 4 helical transmembrane segments spans residues 22 to 42 (IGVLWAIFTICFAIINVVVFI), 97 to 117 (FFVLLSMVLILGCITCFSLFF), 127 to 147 (ICAWMQLLAALCLVLGCMIFP), and 178 to 198 (ILAIIGILNALILSFLAFVLG).

This sequence belongs to the LHFP family. Interacts with GABA(A) receptor subunits. Identified in a complex of 720 kDa composed of LHFPL4, NLGN2, GABRA1, GABRB2, GABRG2 and GABRB3. Interacts with GABRB3. Interacts with GABRA2. Interacts with GABRG2. Interacts with GABRA1. Interacts with NLGN2; leading to mutual regulation of protein level and synaptic clustering.

The protein localises to the cell projection. The protein resides in the dendrite. It localises to the postsynaptic cell membrane. Its function is as follows. Plays a role in the regulation of inhibitory synapse formation and function by being involved in maintening gamma-aminobutyric acid receptors (GABAARs) clustering and their associated scaffold proteins at inhibitory synaptic sites. Acts in concert with NLGN2 to recruit or stabilize GABAARs. The polypeptide is LHFPL tetraspan subfamily member 4 protein (Homo sapiens (Human)).